The following is a 77-amino-acid chain: Sec-independent protein translocase protein TatA (77 aa).

A helical membrane pass occupies residues 1–21 (MGGLSIWHWLIVLLIVALVFG). The interval 40–77 (KDGMREGEAPADPQQLPRSGSVNVDAKDATRSSDSNKA) is disordered. Over residues 64–77 (DAKDATRSSDSNKA) the composition is skewed to basic and acidic residues.

It belongs to the TatA/E family. The Tat system comprises two distinct complexes: a TatABC complex, containing multiple copies of TatA, TatB and TatC subunits, and a separate TatA complex, containing only TatA subunits. Substrates initially bind to the TatABC complex, which probably triggers association of the separate TatA complex to form the active translocon.

The protein localises to the cell inner membrane. Its function is as follows. Part of the twin-arginine translocation (Tat) system that transports large folded proteins containing a characteristic twin-arginine motif in their signal peptide across membranes. TatA could form the protein-conducting channel of the Tat system. This is Sec-independent protein translocase protein TatA from Burkholderia thailandensis (strain ATCC 700388 / DSM 13276 / CCUG 48851 / CIP 106301 / E264).